The following is a 110-amino-acid chain: Host transcription reprogramming factor 2 (110 aa).

Residues 1–18 form the signal peptide; that stretch reads MHLKASSILALLVIGANA. The C2H2-type zinc finger occupies 68–96; sequence IMCGYCGKRFWNKPDLEKHIKLKPSKGGH. The tract at residues 88 to 110 is disordered; it reads KLKPSKGGHKGQPYKEHSWNRPT. Positions 100 to 110 are enriched in basic and acidic residues; that stretch reads PYKEHSWNRPT.

Its subcellular location is the secreted. The protein resides in the host nucleus. In terms of biological role, secreted effector that translocates into the nuclei of host cells to reprogram the expression of immunity-associated genes by binding to effector binding elements (EBEs) in rice. Binds the 5'-CCACCTCC-3' EBE of promoters from targeted rice genes and probably recruits a yet to be determined host repressor. Causes ambivalent immunity with increased susceptibility to the hemibiotrophic pathogens Magnaporthe oryzae and Xanthomonas oryzae pv. oryzae, but enhances resistance to Cochliobolus miyabeanus, a necrotrophic pathogen. This is Host transcription reprogramming factor 2 from Pyricularia oryzae (strain 70-15 / ATCC MYA-4617 / FGSC 8958) (Rice blast fungus).